A 351-amino-acid polypeptide reads, in one-letter code: Glycerol-3-phosphate dehydrogenase 1-like protein (351 aa).

12-17 (GSGNWG) serves as a coordination point for NAD(+). Substrate is bound at residue lysine 122. Alanine 155 lines the NAD(+) pocket. The Proton acceptor role is filled by lysine 206. NAD(+)-binding residues include arginine 271, lysine 298, and glutamine 300. 271-272 (RN) serves as a coordination point for substrate.

The protein belongs to the NAD-dependent glycerol-3-phosphate dehydrogenase family. Interacts with SCN5A.

It is found in the cytoplasm. It carries out the reaction sn-glycerol 3-phosphate + NAD(+) = dihydroxyacetone phosphate + NADH + H(+). Plays a role in regulating cardiac sodium current; decreased enzymatic activity with resulting increased levels of glycerol 3-phosphate activating the DPD1L-dependent SCN5A phosphorylation pathway, may ultimately lead to decreased sodium current; cardiac sodium current may also be reduced due to alterations of NAD(H) balance induced by DPD1L. The sequence is that of Glycerol-3-phosphate dehydrogenase 1-like protein (Gpd1l) from Mus musculus (Mouse).